A 676-amino-acid polypeptide reads, in one-letter code: Serine/threonine-protein kinase Haspin homolog ALK2 (676 aa).

The tract at residues 53–93 (HKGSAEDESQSFFTSSDSPTSKTRPVGKTIENDDYYGKRSS) is disordered. Polar residues predominate over residues 62–75 (QSFFTSSDSPTSKT). The KEN box motif lies at 116–118 (KEN). The D box signature appears at 150 to 158 (RTPLRPISN). The tract at residues 228-312 (SSRSVNDQDP…HKTSHSSLNK (85 aa)) is disordered. Positions 232–259 (VNDQDPNFVQPKPTNSLQKKSSISSFHN) are enriched in polar residues. A Protein kinase domain is found at 383–672 (LCDVKYILHD…TCGDLLSLKG (290 aa)). Residues 389 to 397 (ILHDLREAQ) and lysine 430 contribute to the ATP site.

The protein belongs to the protein kinase superfamily. Ser/Thr protein kinase family. Haspin subfamily. Periodically phosphorylated during the cell cycle with a phosphorylation peak during mitosis and hyperphosphorylated after DNA damage.

It catalyses the reaction L-seryl-[protein] + ATP = O-phospho-L-seryl-[protein] + ADP + H(+). The enzyme catalyses L-threonyl-[protein] + ATP = O-phospho-L-threonyl-[protein] + ADP + H(+). In terms of biological role, serine/threonine haspin-like protein kinase involved in cell cycle regulation. In Saccharomyces cerevisiae (strain ATCC 204508 / S288c) (Baker's yeast), this protein is Serine/threonine-protein kinase Haspin homolog ALK2 (ALK2).